Here is a 164-residue protein sequence, read N- to C-terminus: UPF0304 protein CKO_00501 (164 aa).

It belongs to the UPF0304 family.

The polypeptide is UPF0304 protein CKO_00501 (Citrobacter koseri (strain ATCC BAA-895 / CDC 4225-83 / SGSC4696)).